The following is a 241-amino-acid chain: DNA repair protein RecO (241 aa).

This sequence belongs to the RecO family.

Its function is as follows. Involved in DNA repair and RecF pathway recombination. The protein is DNA repair protein RecO of Dinoroseobacter shibae (strain DSM 16493 / NCIMB 14021 / DFL 12).